The primary structure comprises 300 residues: UDP-N-acetylenolpyruvoylglucosamine reductase (300 aa).

An FAD-binding PCMH-type domain is found at Arg-27–Ile-216. Residue Arg-172 is part of the active site. Ser-223 serves as the catalytic Proton donor. Glu-293 is a catalytic residue.

It belongs to the MurB family. FAD is required as a cofactor.

It localises to the cytoplasm. The catalysed reaction is UDP-N-acetyl-alpha-D-muramate + NADP(+) = UDP-N-acetyl-3-O-(1-carboxyvinyl)-alpha-D-glucosamine + NADPH + H(+). It functions in the pathway cell wall biogenesis; peptidoglycan biosynthesis. Functionally, cell wall formation. The sequence is that of UDP-N-acetylenolpyruvoylglucosamine reductase from Phenylobacterium zucineum (strain HLK1).